Consider the following 413-residue polypeptide: Arginine biosynthesis bifunctional protein ArgJ (413 aa).

T163, K189, T200, E286, N408, and T413 together coordinate substrate. T200 acts as the Nucleophile in catalysis.

This sequence belongs to the ArgJ family. As to quaternary structure, heterotetramer of two alpha and two beta chains.

The protein resides in the cytoplasm. The enzyme catalyses N(2)-acetyl-L-ornithine + L-glutamate = N-acetyl-L-glutamate + L-ornithine. It carries out the reaction L-glutamate + acetyl-CoA = N-acetyl-L-glutamate + CoA + H(+). It participates in amino-acid biosynthesis; L-arginine biosynthesis; L-ornithine and N-acetyl-L-glutamate from L-glutamate and N(2)-acetyl-L-ornithine (cyclic): step 1/1. It functions in the pathway amino-acid biosynthesis; L-arginine biosynthesis; N(2)-acetyl-L-ornithine from L-glutamate: step 1/4. Its function is as follows. Catalyzes two activities which are involved in the cyclic version of arginine biosynthesis: the synthesis of N-acetylglutamate from glutamate and acetyl-CoA as the acetyl donor, and of ornithine by transacetylation between N(2)-acetylornithine and glutamate. This chain is Arginine biosynthesis bifunctional protein ArgJ, found in Staphylococcus aureus (strain Mu50 / ATCC 700699).